The chain runs to 388 residues: Norsolorinic acid reductase A (388 aa).

An NADP(+)-binding site is contributed by Asp-69. The active-site Proton donor is the Tyr-74. His-148 lines the substrate pocket. Residues 178–179 (SD), Gln-204, 233–243 (GVLGRGQFRSA), and 300–308 (RKVEHLKEN) each bind NADP(+).

It belongs to the aldo/keto reductase family. Aldo/keto reductase 2 subfamily.

It participates in mycotoxin biosynthesis; aflatoxin biosynthesis. In terms of biological role, norsolorinic acid reductase; part of the gene cluster that mediates the biosynthesis of aflatoxins, a group of polyketide-derived furanocoumarins, and part of the most toxic and carcinogenic compounds among the known mycotoxins. The four major aflatoxins produced by A.parasiticus are aflatoxin B1 (AFB1), aflatoxin B2 (AFB2), aflatoxin G1 (AFG1) and aflatoxin G2 (AFG2). Within the aflatoxin pathway, the norsolorinic acid reductase aflE may play a role in the conversion of norsolorinic acid (NOR) to averantin (AVN). The biosynthesis of aflatoxins begins with the norsolorinic acid synthase aflC that combines a hexanoyl starter unit produced by the fatty acid synthase aflA/aflB and 7 malonyl-CoA extender units to synthesize the precursor NOR. The second step is the conversion of NOR to averantin and requires the norsolorinic acid ketoreductase aflD, which catalyzes the dehydration of norsolorinic acid to form (1'S)-averantin. The norsolorinic acid reductases aflE and aflF may also play a role in the conversion of NOR to AVN. The cytochrome P450 monooxygenase aflG then catalyzes the hydroxylation of AVN to 5'hydroxyaverantin (HAVN). The next step is performed by the 5'-hydroxyaverantin dehydrogenase aflH that transforms HAVN to 5'-oxoaverantin (OAVN) which is further converted to averufin (AVF) by aflK that plays a dual role in the pathway, as a 5'-oxoaverantin cyclase that mediates conversion of 5'-oxoaverantin, as well as a versicolorin B synthase in a later step in the pathway. The averufin oxidase aflI catalyzes the conversion of AVF to versiconal hemiacetal acetate (VHA). VHA is then the substrate for the versiconal hemiacetal acetate esterase aflJ to yield versiconal (VAL). Versicolorin B synthase aflK then converts VAL to versicolorin B (VERB) by closing the bisfuran ring of aflatoxin which is required for DNA-binding, thus giving to aflatoxin its activity as a mutagen. Then, the activity of the versicolorin B desaturase aflL leads to versicolorin A (VERA). A branch point starts from VERB since it can also be converted to dihydrodemethylsterigmatocystin (DMDHST), probably also by aflL, VERA being a precursor for aflatoxins B1 and G1, and DMDHST for aflatoxins B2 and G2. Next, the versicolorin reductase aflM and the cytochrome P450 monooxygenase aflN are involved in conversion of VERA to demethylsterigmatocystin (DMST). AflX and aflY seem also involved in this step, through probable aflX-mediated epoxide ring-opening step following versicolorin A oxidation and aflY-mediated Baeyer-Villiger oxidation required for the formation of the xanthone ring. The methyltransferase aflO then leads to the modification of DMST to sterigmatocystin (ST), and of DMDHST to dihydrosterigmatocystin (DHST). Both ST and DHST are then substrates of the O-methyltransferase aflP to yield O-methylsterigmatocystin (OMST) and dihydro-O-methylsterigmatocystin (DHOMST), respectively. Finally OMST is converted to aflatoxins B1 and G1, and DHOMST to aflatoxins B2 and G2, via the action of several enzymes including O-methylsterigmatocystin oxidoreductase aflQ, the cytochrome P450 monooxygenase aflU, but also the NADH-dependent flavin oxidoreductase nadA which is specifically required for the synthesis of AFG1. The protein is Norsolorinic acid reductase A of Aspergillus parasiticus (strain ATCC 56775 / NRRL 5862 / SRRC 143 / SU-1).